The sequence spans 434 residues: Glycylpeptide N-tetradecanoyltransferase 1 (434 aa).

The interval 1–24 (MADNNSPPGSVEQKADQIVEANPL) is disordered. The residue at position 2 (Ala-2) is an N-acetylalanine. Tetradecanoyl-CoA-binding positions include 48-51 (HKFW), 184-186 (LCV), and 192-196 (SKRLA). The active-site Proton acceptor; via carboxylate is the Leu-434.

It belongs to the NMT family. In terms of tissue distribution, expressed ubiquitously, with higher levels in young tissues (at protein level).

The protein localises to the cytoplasm. It catalyses the reaction N-terminal glycyl-[protein] + tetradecanoyl-CoA = N-tetradecanoylglycyl-[protein] + CoA + H(+). Functionally, adds a myristoyl group to the N-terminal glycine residue of certain cellular proteins. Can also use decanoyl-CoA and lauroyl-CoA as substrates. The polypeptide is Glycylpeptide N-tetradecanoyltransferase 1 (NMT1) (Arabidopsis thaliana (Mouse-ear cress)).